Here is a 140-residue protein sequence, read N- to C-terminus: MKPAARRKARELAVQAVYSWQMSKNPLDQIELSIVTSNNMQDVDTEYFLELLRAVVRRTAELDAKIKPYLGRLPEELDPVENAILRLATYELVERIDVPYKVVINEAIELAKSFGAEESHKFVNGVLDKAIKTLRKHELS.

Belongs to the NusB family.

Involved in transcription antitermination. Required for transcription of ribosomal RNA (rRNA) genes. Binds specifically to the boxA antiterminator sequence of the ribosomal RNA (rrn) operons. The polypeptide is Transcription antitermination protein NusB (Pseudoalteromonas atlantica (strain T6c / ATCC BAA-1087)).